The following is a 314-amino-acid chain: Probable cell division protein WhiA (314 aa).

The H-T-H motif DNA-binding region spans 274 to 308 (SLKELGEMISTGPISKSGVNHRLRKLNELADKIRS).

It belongs to the WhiA family.

Involved in cell division and chromosome segregation. The protein is Probable cell division protein WhiA of Staphylococcus haemolyticus (strain JCSC1435).